The primary structure comprises 105 residues: Large ribosomal subunit protein uL24 (105 aa).

It belongs to the universal ribosomal protein uL24 family. In terms of assembly, part of the 50S ribosomal subunit.

Functionally, one of two assembly initiator proteins, it binds directly to the 5'-end of the 23S rRNA, where it nucleates assembly of the 50S subunit. In terms of biological role, one of the proteins that surrounds the polypeptide exit tunnel on the outside of the subunit. The sequence is that of Large ribosomal subunit protein uL24 from Vibrio vulnificus (strain YJ016).